Consider the following 223-residue polypeptide: Ribose-5-phosphate isomerase A (223 aa).

Substrate is bound by residues 26-29 (TGST), 82-85 (DGAD), and 95-98 (KGGG). Glu-104 acts as the Proton acceptor in catalysis. Lys-122 is a substrate binding site.

It belongs to the ribose 5-phosphate isomerase family. Homodimer.

The catalysed reaction is aldehydo-D-ribose 5-phosphate = D-ribulose 5-phosphate. It participates in carbohydrate degradation; pentose phosphate pathway; D-ribose 5-phosphate from D-ribulose 5-phosphate (non-oxidative stage): step 1/1. Functionally, catalyzes the reversible conversion of ribose-5-phosphate to ribulose 5-phosphate. The protein is Ribose-5-phosphate isomerase A of Streptococcus agalactiae serotype V (strain ATCC BAA-611 / 2603 V/R).